The chain runs to 1327 residues: Putative ATP-dependent RNA helicase ucp12 (1327 aa).

2 disordered regions span residues 1 to 58 (MGSK…KQLV) and 201 to 222 (QAAR…NEKV). Basic and acidic residues predominate over residues 18–41 (SKNKEKNIKGKKKNSLDPIEKNKQ). Residues 42–58 (ETAGLQTTSRPTAKQLV) are compositionally biased toward polar residues. The UBA domain occupies 276-315 (EPDTSIVNDLISLGFRDIHAKEACQYCVSLEDALEWLIIH). One can recognise an RWD domain in the interval 405–504 (DDVSALQSIL…NHLQENIEDF (100 aa)). The Helicase ATP-binding domain maps to 587–756 (MDAIQHSQVV…FGNAGHLHIH (170 aa)). 600–607 (GETGSGKS) contacts ATP. Residues 703–706 (DEVH) carry the DEAH box motif. Positions 797–968 (LISRLVSSID…QVCLNVVPLV (172 aa)) constitute a Helicase C-terminal domain.

This sequence belongs to the DEAD box helicase family. DEAH subfamily.

The protein resides in the cytoplasm. It carries out the reaction ATP + H2O = ADP + phosphate + H(+). Functionally, probable ATP-binding RNA helicase. This chain is Putative ATP-dependent RNA helicase ucp12 (ucp12), found in Schizosaccharomyces pombe (strain 972 / ATCC 24843) (Fission yeast).